The sequence spans 128 residues: Cytochrome c oxidase subunit 5B, mitochondrial (128 aa).

The transit peptide at 1 to 30 (MASRLLRGVGALAAQALRRTARGAAVTRSM) directs the protein to the mitochondrion. An N6-acetyllysine mark is found at Lys-67 and Lys-85. Zn(2+) contacts are provided by Cys-90, Cys-92, Cys-112, and Cys-115. Position 120 is an N6-acetyllysine (Lys-120).

Belongs to the cytochrome c oxidase subunit 5B family. As to quaternary structure, component of the cytochrome c oxidase (complex IV, CIV), a multisubunit enzyme composed of 14 subunits. The complex is composed of a catalytic core of 3 subunits MT-CO1, MT-CO2 and MT-CO3, encoded in the mitochondrial DNA, and 11 supernumerary subunits COX4I, COX5A, COX5B, COX6A, COX6B, COX6C, COX7A, COX7B, COX7C, COX8 and NDUFA4, which are encoded in the nuclear genome. The complex exists as a monomer or a dimer and forms supercomplexes (SCs) in the inner mitochondrial membrane with NADH-ubiquinone oxidoreductase (complex I, CI) and ubiquinol-cytochrome c oxidoreductase (cytochrome b-c1 complex, complex III, CIII), resulting in different assemblies (supercomplex SCI(1)III(2)IV(1) and megacomplex MCI(2)III(2)IV(2)).

The protein resides in the mitochondrion inner membrane. Its pathway is energy metabolism; oxidative phosphorylation. Functionally, component of the cytochrome c oxidase, the last enzyme in the mitochondrial electron transport chain which drives oxidative phosphorylation. The respiratory chain contains 3 multisubunit complexes succinate dehydrogenase (complex II, CII), ubiquinol-cytochrome c oxidoreductase (cytochrome b-c1 complex, complex III, CIII) and cytochrome c oxidase (complex IV, CIV), that cooperate to transfer electrons derived from NADH and succinate to molecular oxygen, creating an electrochemical gradient over the inner membrane that drives transmembrane transport and the ATP synthase. Cytochrome c oxidase is the component of the respiratory chain that catalyzes the reduction of oxygen to water. Electrons originating from reduced cytochrome c in the intermembrane space (IMS) are transferred via the dinuclear copper A center (CU(A)) of subunit 2 and heme A of subunit 1 to the active site in subunit 1, a binuclear center (BNC) formed by heme A3 and copper B (CU(B)). The BNC reduces molecular oxygen to 2 water molecules using 4 electrons from cytochrome c in the IMS and 4 protons from the mitochondrial matrix. The sequence is that of Cytochrome c oxidase subunit 5B, mitochondrial (Cox5b) from Mus musculus (Mouse).